We begin with the raw amino-acid sequence, 233 residues long: Small ribosomal subunit protein uS2 (233 aa).

It belongs to the universal ribosomal protein uS2 family.

The chain is Small ribosomal subunit protein uS2 from Bacillus mycoides (strain KBAB4) (Bacillus weihenstephanensis).